A 182-amino-acid chain; its full sequence is Putative manganese efflux pump MntP 1 (182 aa).

6 helical membrane passes run 4–24, 42–62, 63–83, 103–123, 127–147, and 162–182; these read LLLL…GLGA, IFQG…IAFI, SAFD…KMIY, LILS…LHLI, VFLS…LGVL, and ILGG…HLFF.

This sequence belongs to the MntP (TC 9.B.29) family.

The protein localises to the cell inner membrane. Functionally, probably functions as a manganese efflux pump. The polypeptide is Putative manganese efflux pump MntP 1 (Wolinella succinogenes (strain ATCC 29543 / DSM 1740 / CCUG 13145 / JCM 31913 / LMG 7466 / NCTC 11488 / FDC 602W) (Vibrio succinogenes)).